A 538-amino-acid chain; its full sequence is MTTSLQDGQSAAGRAGAQDSPLAVQVCRVAQGKGDAQDPAQVPGLHALSPASDATRRGAMDRRKAKDLEVQETPSIPNPFPELCCSPLTSVLSAGLFPRSNSRKKQVIKVYSEDETSRALEVPSDVTARDVCQLLILKNHYVDDNSWTLFEHLSHTGVERTVEDHELLTEVLSHWVMEEDNKLYLRKNYAKYEFFKNPMYFFPEHMVSFATEMNGDRSLTQIPQVFLSSNTYPEIHGFLHAKEQGKKSWKKAYFFLRRSGLYFSTKGTSKEPRHLQFFSEFSTSNVYMSLAGKKKHGAPTPYGFCFKPTKAGGPRDLKMLCAEEDQSRMCWVTAIRLLKYGMQLYQNYMHPSQARSACSSQSVSPMRSVSENSLVAMDFSGQKTRVIDNPTEALSVAVEEGLAWRKKGCLRLGNHGSPTAPSQSSAVNMALHRSQPWFHHRISRDEAQQLITRQGPVDGVFLVRDSQSNPRTFVLSMSHGQKIKHFQIIPVEDDGEVFHTLDDGHTKFTDLIQLVEFYQLNKGVLPCKLKHYCARMAV.

The segment at 1–73 (MTTSLQDGQS…KAKDLEVQET (73 aa)) is disordered. T2 is modified (N-acetylthreonine). The span at 54 to 69 (ATRRGAMDRRKAKDLE) shows a compositional bias: basic and acidic residues. Residues 104–190 (KKQVIKVYSE…NKLYLRKNYA (87 aa)) form the Ras-associating domain. Residues 232 to 340 (YPEIHGFLHA…WVTAIRLLKY (109 aa)) enclose the PH domain. Phosphoserine is present on residues S370 and S373. The region spanning 437-533 (WFHHRISRDE…VLPCKLKHYC (97 aa)) is the SH2 domain.

It belongs to the GRB7/10/14 family. As to quaternary structure, interacts with the cytoplasmic domain of the autophosphorylated insulin receptor, through the SH2 domain. Interacts with GRB14 (via BPS domain); this interaction protects the tyrosines in the activation loop on INSR from dephosphorylation. Binds to the ankyrin repeat region of TNKS2 via its N-terminus. Interacts with activated NRAS. Interacts (via SH2 domain) with TEK/TIE2 (tyrosine phosphorylated). Post-translationally, phosphorylated on serine residues. Phosphorylated on tyrosine residues by TEK/TIE2.

The protein resides in the cytoplasm. Its subcellular location is the endosome membrane. Its function is as follows. Adapter protein which modulates coupling of cell surface receptor kinases with specific signaling pathways. Binds to, and suppresses signals from, the activated insulin receptor (INSR). Potent inhibitor of insulin-stimulated MAPK3 phosphorylation. Plays a critical role regulating PDPK1 membrane translocation in response to insulin stimulation and serves as an adapter protein to recruit PDPK1 to activated insulin receptor, thus promoting PKB/AKT1 phosphorylation and transduction of the insulin signal. This is Growth factor receptor-bound protein 14 (Grb14) from Rattus norvegicus (Rat).